A 212-amino-acid chain; its full sequence is Ras-like protein (212 aa).

15–22 (GGGGVGKS) contributes to the GTP binding site. The Effector region motif lies at 37 to 45 (YDPTIEDSY). GTP-binding positions include 62–66 (DTAGQ) and 121–124 (NKCD). Residues C205 and C206 are each lipidated (S-palmitoyl cysteine). A Cysteine methyl ester modification is found at C209. Residue C209 is the site of S-geranylgeranyl cysteine attachment. Residues 210-212 (IVM) constitute a propeptide, removed in mature form.

Belongs to the small GTPase superfamily. Ras family.

Its subcellular location is the cell membrane. The enzyme catalyses GTP + H2O = GDP + phosphate + H(+). Alternates between an inactive form bound to GDP and an active form bound to GTP. Activated by a guanine nucleotide-exchange factor (GEF) and inactivated by a GTPase-activating protein (GAP). This Emericella nidulans (strain FGSC A4 / ATCC 38163 / CBS 112.46 / NRRL 194 / M139) (Aspergillus nidulans) protein is Ras-like protein (rasA).